The primary structure comprises 265 residues: Indole-3-glycerol phosphate synthase (265 aa).

Belongs to the TrpC family.

It carries out the reaction 1-(2-carboxyphenylamino)-1-deoxy-D-ribulose 5-phosphate + H(+) = (1S,2R)-1-C-(indol-3-yl)glycerol 3-phosphate + CO2 + H2O. Its pathway is amino-acid biosynthesis; L-tryptophan biosynthesis; L-tryptophan from chorismate: step 4/5. This Hyphomonas neptunium (strain ATCC 15444) protein is Indole-3-glycerol phosphate synthase.